Here is a 61-residue protein sequence, read N- to C-terminus: Large ribosomal subunit protein uL30 (61 aa).

This sequence belongs to the universal ribosomal protein uL30 family. As to quaternary structure, part of the 50S ribosomal subunit.

The chain is Large ribosomal subunit protein uL30 from Francisella philomiragia subsp. philomiragia (strain ATCC 25017 / CCUG 19701 / FSC 153 / O#319-036).